A 222-amino-acid chain; its full sequence is Glycerol-3-phosphate acyltransferase (222 aa).

6 consecutive transmembrane segments (helical) span residues 4–24, 56–76, 87–107, 130–150, 153–173, and 174–191; these read ALLL…IPTG, PAAI…VALV, ALPA…VVLG, FMLN…VIFF, IVSL…LALQ, and LPPP…YVIV.

The protein belongs to the PlsY family. In terms of assembly, probably interacts with PlsX.

It localises to the cell inner membrane. The enzyme catalyses an acyl phosphate + sn-glycerol 3-phosphate = a 1-acyl-sn-glycero-3-phosphate + phosphate. The protein operates within lipid metabolism; phospholipid metabolism. Its function is as follows. Catalyzes the transfer of an acyl group from acyl-phosphate (acyl-PO(4)) to glycerol-3-phosphate (G3P) to form lysophosphatidic acid (LPA). This enzyme utilizes acyl-phosphate as fatty acyl donor, but not acyl-CoA or acyl-ACP. This is Glycerol-3-phosphate acyltransferase from Synechocystis sp. (strain ATCC 27184 / PCC 6803 / Kazusa).